The primary structure comprises 289 residues: Iodotyrosine deiodinase 1 (289 aa).

The chain crosses the membrane as a helical span at residues 1-21 (MYFLTPILVAILCILVVWIFK). Residues 47-58 (DLKDSSDLHQAE) show a composition bias toward basic and acidic residues. Positions 47-69 (DLKDSSDLHQAEEDADEWQESEE) are disordered. Acidic residues predominate over residues 59-69 (EDADEWQESEE). FMN contacts are provided by residues 100 to 104 (RRSVR), Ser-128, and 128 to 129 (SG). Ala-130, Glu-157, Tyr-161, and Lys-182 together coordinate 3,5-diiodo-L-tyrosine. 3-iodo-L-tyrosine is bound by residues Ala-130, Glu-157, Tyr-161, and Lys-182. FMN contacts are provided by residues 237-239 (TTT) and Arg-279.

The protein belongs to the nitroreductase family. In terms of assembly, homodimer. It depends on FMN as a cofactor.

It is found in the cell membrane. The protein localises to the cytoplasmic vesicle membrane. The enzyme catalyses 2 iodide + L-tyrosine + 2 NADP(+) = 3,5-diiodo-L-tyrosine + 2 NADPH + H(+). It carries out the reaction iodide + L-tyrosine + NADP(+) = 3-iodo-L-tyrosine + NADPH. It catalyses the reaction 3-iodo-L-tyrosine + iodide + NADP(+) = 3,5-diiodo-L-tyrosine + NADPH + H(+). The catalysed reaction is L-tyrosine + chloride + NADP(+) = 3-chloro-L-tyrosine + NADPH. The enzyme catalyses bromide + L-tyrosine + NADP(+) = 3-bromo-L-tyrosine + NADPH. Its function is as follows. Catalyzes the dehalogenation of halotyrosines such as 3-bromo-L-tyrosine, 3-chloro-L-tyrosine, 3-iodo-L-tyrosine and 3,5-diiodo-L-tyrosine. During thyroid hormone biosynthesis, facilitates iodide salvage by catalysing the oxidative NADPH-dependent deiodination of the halogenated by-products of thyroid hormone production, monoiodotyrosine (L-MIT) and diiodotyrosine (L-DIT). The scavanged iodide can then reenter the hormone-producing pathways. Acts more efficiently on 3-iodo-L-tyrosine than 3,5-diiodo-L-tyrosine. This Pongo abelii (Sumatran orangutan) protein is Iodotyrosine deiodinase 1 (IYD).